Reading from the N-terminus, the 72-residue chain is Translation initiation factor IF-1 (72 aa).

The 72-residue stretch at 1-72 (MAKDDVIVVD…DKGRITHRYK (72 aa)) folds into the S1-like domain.

Belongs to the IF-1 family. As to quaternary structure, component of the 30S ribosomal translation pre-initiation complex which assembles on the 30S ribosome in the order IF-2 and IF-3, IF-1 and N-formylmethionyl-tRNA(fMet); mRNA recruitment can occur at any time during PIC assembly.

Its subcellular location is the cytoplasm. Its function is as follows. One of the essential components for the initiation of protein synthesis. Stabilizes the binding of IF-2 and IF-3 on the 30S subunit to which N-formylmethionyl-tRNA(fMet) subsequently binds. Helps modulate mRNA selection, yielding the 30S pre-initiation complex (PIC). Upon addition of the 50S ribosomal subunit IF-1, IF-2 and IF-3 are released leaving the mature 70S translation initiation complex. This Aliarcobacter butzleri (strain RM4018) (Arcobacter butzleri) protein is Translation initiation factor IF-1.